The chain runs to 269 residues: Phosphatidylglycerol--prolipoprotein diacylglyceryl transferase (269 aa).

Helical transmembrane passes span 21-41 (WYGI…VLEG), 54-74 (LLLY…VVFE), and 88-108 (IWDG…VILI). An a 1,2-diacyl-sn-glycero-3-phospho-(1'-sn-glycerol)-binding site is contributed by arginine 136. The next 2 helical transmembrane spans lie at 206-226 (GEVV…IEGM) and 236-256 (LRVS…AIFY).

It belongs to the Lgt family.

It localises to the cell membrane. The enzyme catalyses L-cysteinyl-[prolipoprotein] + a 1,2-diacyl-sn-glycero-3-phospho-(1'-sn-glycerol) = an S-1,2-diacyl-sn-glyceryl-L-cysteinyl-[prolipoprotein] + sn-glycerol 1-phosphate + H(+). It participates in protein modification; lipoprotein biosynthesis (diacylglyceryl transfer). Its function is as follows. Catalyzes the transfer of the diacylglyceryl group from phosphatidylglycerol to the sulfhydryl group of the N-terminal cysteine of a prolipoprotein, the first step in the formation of mature lipoproteins. This chain is Phosphatidylglycerol--prolipoprotein diacylglyceryl transferase, found in Ligilactobacillus salivarius (strain UCC118) (Lactobacillus salivarius).